Consider the following 359-residue polypeptide: MVLRNPGTKGIASALDERSGEIFRRIVESYLESGEPLGSRNLSRLLPVSLSPASVRNVMSDLEDLGLIYSPHVSAGRLPTQLGLRFFVDAFMQVGNLSPEERASIERQVHPGNRDRSVENLLTEASQMLSGMSRGAGLVITTKSDPVLKHVEFIRLAPTKALAVLVGEHDQVENRIIELPAGITSAQLTEAANFVNAHLAGQTIPELRTQLEKVKETVRGELDALSQDLVERGLAIWSGSEGDGQPARLIVRGRANLLEGLEGTDDIERLRMLFDDLEKKDSLIEILNLAESGPGVRIFIGSENKLFSLSGSSLIVAPYRDSDDRIVGAVGVIGPTRLNYSRIVPMVDYTAQLMSRLSR.

The protein belongs to the HrcA family.

Negative regulator of class I heat shock genes (grpE-dnaK-dnaJ and groELS operons). Prevents heat-shock induction of these operons. This is Heat-inducible transcription repressor HrcA from Rhizobium meliloti (strain 1021) (Ensifer meliloti).